A 188-amino-acid chain; its full sequence is MSLLPYNATLCRVLRHNVKFIRSVQTSAARVSAEKTPIQVWGWDYLMRQRALKRPIAPHLTIYKPQMTWMVSGLHRVTGCAMAGTLLIGGVGFSVLPLDFTTFVEFIRGLGIPWVILDTFKFIIAFPIAFHTLNGIRFIGFDMAKGTDIPSIYRGAYLVLGLAALISLAVVVYPRWERHKKATLPTNH.

The transit peptide at Met1–Val31 directs the protein to the mitochondrion. Over Ser32 to Trp69 the chain is Mitochondrial matrix. Residues Met70–Val95 traverse the membrane as a helical segment. A rhodoquinol-binding residues include Ser72 and Arg76. 2 residues coordinate a ubiquinone: Ser72 and Arg76. Residues Leu96–Pro113 are Mitochondrial intermembrane-facing. The helical transmembrane segment at Trp114–Gly140 threads the bilayer. Position 131 (His131) interacts with heme b. The Mitochondrial matrix portion of the chain corresponds to Phe141–Tyr153. Residues Arg154–Trp176 traverse the membrane as a helical segment. Residues Glu177–His188 lie on the Mitochondrial intermembrane side of the membrane.

The protein belongs to the cytochrome b558 family. Component of the mitochondrial electron transport chain complex II composed of four subunits: a flavoprotein (Fp), an iron-sulfur protein (Ip), and a large cytochrome b (CybL) subunit and a small cytochrome b (CybS) subunit. There are 2 developmental stage-specific forms of complex II which have the Ip and CybL subunits in common. Complex II from the free-living larvae (aerobic environment) acts as a succinate dehydrogenase and is composed of the common subunit Ip and CybL and the stage specific subunits FpL and CybSL. Complex II from parasitic larvae and adults (anaerobic environment) acts as a fumarate reductase and is composed of the common subunit Ip and CybL and the stage specific subunits FpA and CybSA. The cofactor is heme b. As to expression, expressed in adult muscles (at protein level).

Its subcellular location is the mitochondrion inner membrane. It participates in carbohydrate metabolism; tricarboxylic acid cycle; fumarate from succinate (eukaryal route): step 1/1. Its function is as follows. Membrane-bound large subunit (CybL) of the mitochondrial electron transport chain complex II, which together with the membrane-bound small subunit (CybS), anchor the catalytic subunits to the inner mitochondria membrane. During the free-living egg-larvae stages, which occur in an aerobic environment, complex II acts as a succinate dehydrogenase by transferring electrons from succinate to ubiquinone. During the parasitic larvae and adult stages, which occur in an anaerobic environment, complex II acts as a fumarate reductase by transferring electrons from rhodoquinol to fumarate. This chain is Succinate dehydrogenase [ubiquinone] cytochrome b large subunit, mitochondrial, found in Ascaris suum (Pig roundworm).